The sequence spans 1394 residues: DNA-directed RNA polymerase subunit beta' (1394 aa).

Residues C70, C72, C85, and C88 each coordinate Zn(2+). Mg(2+) contacts are provided by D470, D472, and D474. Zn(2+) is bound by residues C815, C889, C896, and C899.

This sequence belongs to the RNA polymerase beta' chain family. The RNAP catalytic core consists of 2 alpha, 1 beta, 1 beta' and 1 omega subunit. When a sigma factor is associated with the core the holoenzyme is formed, which can initiate transcription. It depends on Mg(2+) as a cofactor. Requires Zn(2+) as cofactor.

It carries out the reaction RNA(n) + a ribonucleoside 5'-triphosphate = RNA(n+1) + diphosphate. In terms of biological role, DNA-dependent RNA polymerase catalyzes the transcription of DNA into RNA using the four ribonucleoside triphosphates as substrates. The polypeptide is DNA-directed RNA polymerase subunit beta' (Anaeromyxobacter sp. (strain K)).